We begin with the raw amino-acid sequence, 718 residues long: Putative methyltransferase NSUN7 (718 aa).

Cys-439 functions as the Nucleophile in the catalytic mechanism. Disordered stretches follow at residues 536 to 557 (GKSSKREKKKKKSKTSLTKGAT), 578 to 616 (ANLSETVTKPPLPQKNTAQVGASSQTRKPNKLAPHPAVP), and 694 to 718 (SLSRKEEKPKDDTPSSLLRPPRRWL). The segment covering 538–549 (SSKREKKKKKSK) has biased composition (basic residues). The span at 591-604 (QKNTAQVGASSQTR) shows a compositional bias: polar residues. A compositionally biased stretch (basic and acidic residues) spans 696–706 (SRKEEKPKDDT).

This sequence belongs to the class I-like SAM-binding methyltransferase superfamily. RsmB/NOP family.

In terms of biological role, may have S-adenosyl-L-methionine-dependent methyl-transferase activity. This Homo sapiens (Human) protein is Putative methyltransferase NSUN7 (NSUN7).